The primary structure comprises 223 residues: Small ribosomal subunit protein uS3 (223 aa).

The KH type-2 domain maps to I39–K115.

It belongs to the universal ribosomal protein uS3 family. In terms of assembly, part of the 30S ribosomal subunit. Forms a tight complex with proteins S10 and S14.

Its function is as follows. Binds the lower part of the 30S subunit head. Binds mRNA in the 70S ribosome, positioning it for translation. This is Small ribosomal subunit protein uS3 from Leuconostoc citreum (strain KM20).